A 964-amino-acid chain; its full sequence is Pumilio homolog 3 (964 aa).

Residues 1–22 are disordered; sequence MMIPELGRRPMHRGNEDSSFGD. At Ser-192 the chain carries Phosphoserine. Disordered stretches follow at residues 204–235, 256–300, and 343–388; these read PVVQ…ASQG, GTPD…TSGL, and DGHN…VANP. Composition is skewed to polar residues over residues 207–216 and 223–234; these read QQPSRPASRN and DSNNNLSPSASQ. Phosphothreonine is present on Thr-257. Composition is skewed to polar residues over residues 287–300 and 356–384; these read TSNQ…TSGL and RSDQ…SGSG. Positions 606 to 946 constitute a PUM-HD domain; it reads FGSSMLEEFK…HIVARVEKLV (341 aa). 8 Pumilio repeats span residues 626–661, 662–697, 698–733, 734–769, 770–806, 807–842, 843–878, and 879–920; these read EIAG…MVYE, EIMP…ELGE, KLID…QMVK, ELDG…FIIS, TFFG…KVME, EILS…VIIK, ELAG…LLVN, and EMLG…LILT.

The protein resides in the cytoplasm. Its function is as follows. Sequence-specific RNA-binding protein that regulates translation and mRNA stability by binding the 3'-UTR of target mRNAs. Binds the APUM-binding elements (APBEs) in the 3'-UTR mRNA sequence of CLV1, PNH, WUS and FAS2. The polypeptide is Pumilio homolog 3 (APUM3) (Arabidopsis thaliana (Mouse-ear cress)).